The following is a 553-amino-acid chain: Nucleoside-diphosphatase mig-23 (553 aa).

Topologically, residues 1 to 8 (MRVSRRFT) are cytoplasmic. The chain crosses the membrane as a helical span at residues 9 to 29 (ILAITAMIFLSLIICIYAVAA). Over 30 to 489 (HTTVNVILQK…IVKETHSASE (460 aa)) the chain is Lumenal. Glu174 functions as the Proton acceptor in the catalytic mechanism. Residues Asn190 and Asn284 are each glycosylated (N-linked (GlcNAc...) asparagine). Residues 490-510 (SLWAPLFFLSAVFCLFVLVCA) form a helical membrane-spanning segment. The Cytoplasmic portion of the chain corresponds to 511-553 (KEHSLLCFDDKRRASFGLTRRQYSYKMLKEDRTSSSAFLENFA).

This sequence belongs to the GDA1/CD39 NTPase family.

The protein resides in the golgi apparatus membrane. The enzyme catalyses a ribonucleoside 5'-diphosphate + H2O = a ribonucleoside 5'-phosphate + phosphate + H(+). Its function is as follows. Seems to be able to hydrolyze ADP, UDP and GDP. Supports mig-17 glycosylation and surface expression, which is required for proper migration of distal tip cells during gonad morphogenesis. The chain is Nucleoside-diphosphatase mig-23 from Caenorhabditis briggsae.